Here is a 274-residue protein sequence, read N- to C-terminus: uncharacterized protein (274 aa).

Residues 99–206 are a coiled coil; that stretch reads NNVISGYVDL…ESEMEIFIQK (108 aa).

This is an uncharacterized protein from Dictyostelium discoideum (Social amoeba).